A 419-amino-acid polypeptide reads, in one-letter code: Dynein regulatory complex protein 9 (419 aa).

Disordered stretches follow at residues 1–47 (MEGE…SPEV) and 393–419 (SFKMPKKEKDDSKDAKGKEKDKRRGKK). The span at 34–44 (EELEEEEEETS) shows a compositional bias: acidic residues. The IQ domain maps to 371 to 400 (ELRSIVKLQAWWRGTVVRREIGSFKMPKKE).

The protein belongs to the DRC9 family. In terms of assembly, component of the nexin-dynein regulatory complex (N-DRC). Interacts (via IQ domain) with CALM when calcium levels are low. Does not interact with CALM in the presence of Ca(2+). Interacts with the HSP70 proteins HSPA1L and HSPA8. May form a complex with CAMK4 and HSP70.

It localises to the cytoplasm. Its subcellular location is the cell projection. The protein localises to the cilium. It is found in the flagellum. The protein resides in the cytoskeleton. It localises to the flagellum axoneme. Functionally, component of the nexin-dynein regulatory complex (N-DRC), a key regulator of ciliary/flagellar motility which maintains the alignment and integrity of the distal axoneme and regulates microtubule sliding in motile axonemes. Binds calmodulin when cellular Ca(2+) levels are low and thereby contributes to the regulation of calcium and calmodulin-dependent protein kinase IV (CAMK4) activity; contributes to the regulation of CAMK4 signaling cascades. Required for normal axoneme assembly in sperm flagella, normal sperm tail formation and for male fertility. This Rattus norvegicus (Rat) protein is Dynein regulatory complex protein 9 (Iqcg).